Consider the following 252-residue polypeptide: Major prion protein (252 aa).

A signal peptide spans 1-22 (MANLGCWMLVLFVATWSDLGLC). Positions 23 to 38 (KKRPKPGGWNTGGSRY) are interaction with ADGRG6. The tract at residues 23 to 229 (KKRPKPGGWN…ESQAYYQRGS (207 aa)) is interaction with GRB2, ERI3 and SYN1. Positions 26–106 (PKPGGWNTGG…QWNKPSKPKT (81 aa)) are disordered. 5 tandem repeats follow at residues 51 to 58 (PQGGGWGQ), 59 to 66 (PHGGGWGQ), 67 to 74 (PHGGGWGQ), 75 to 82 (PHGGSWGQ), and 83 to 90 (PHGGGWGQ). The 5 X 8 AA tandem repeats of P-H-G-G-G-W-G-Q stretch occupies residues 51-90 (PQGGGWGQPHGGGWGQPHGGGWGQPHGGSWGQPHGGGWGQ). The span at 52–94 (QGGGWGQPHGGGWGQPHGGGWGQPHGGSWGQPHGGGWGQGGGT) shows a compositional bias: gly residues. Residues His60, Gly61, Gly62, His68, Gly69, Gly70, His76, Gly77, Gly78, His84, Gly85, and Gly86 each coordinate Cu(2+). A disulfide bridge links Cys178 with Cys213. N-linked (GlcNAc...) asparagine glycosylation is found at Asn180 and Asn196. The GPI-anchor amidated serine moiety is linked to residue Ser229. A propeptide spans 230-252 (SMVLFSSPPVILLISFLIFLIVG) (removed in mature form).

This sequence belongs to the prion family. In terms of assembly, monomer and homodimer. Has a tendency to aggregate into amyloid fibrils containing a cross-beta spine, formed by a steric zipper of superposed beta-strands. Soluble oligomers may represent an intermediate stage on the path to fibril formation. Copper binding may promote oligomerization. Interacts with GRB2, APP, ERI3/PRNPIP and SYN1. Mislocalized cytosolically exposed PrP interacts with MGRN1; this interaction alters MGRN1 subcellular location and causes lysosomal enlargement. Interacts with APP. Interacts with KIAA1191. Interacts with ADGRG6.

Its subcellular location is the cell membrane. It localises to the golgi apparatus. Its function is as follows. Its primary physiological function is unclear. May play a role in neuronal development and synaptic plasticity. May be required for neuronal myelin sheath maintenance. May promote myelin homeostasis through acting as an agonist for ADGRG6 receptor. May play a role in iron uptake and iron homeostasis. Soluble oligomers are toxic to cultured neuroblastoma cells and induce apoptosis (in vitro). Association with GPC1 (via its heparan sulfate chains) targets PRNP to lipid rafts. Also provides Cu(2+) or Zn(2+) for the ascorbate-mediated GPC1 deaminase degradation of its heparan sulfate side chains. The chain is Major prion protein (PRNP) from Sapajus apella (Brown-capped capuchin).